Here is a 303-residue protein sequence, read N- to C-terminus: Coenzyme PQQ synthesis protein B (303 aa).

It belongs to the PqqB family.

It participates in cofactor biosynthesis; pyrroloquinoline quinone biosynthesis. In terms of biological role, may be involved in the transport of PQQ or its precursor to the periplasm. The polypeptide is Coenzyme PQQ synthesis protein B (Acinetobacter baumannii (strain SDF)).